The following is a 318-amino-acid chain: Myoblast determination protein 1 (318 aa).

Met-1 is covalently cross-linked (Peptide (Met-Gly) (interchain with G-Cter in ubiquitin)). Lys-104 bears the N6-methyllysine; by EHMT2 mark. The 52-residue stretch at 109–160 folds into the bHLH domain; it reads DRRKAATMRERRRLSKVNEAFETLKRCTSSNPNQRLPKVEILRNAIRYIEGL. Disordered stretches follow at residues 175 to 224 and 262 to 318; these read AAFY…RQNG and SPAA…YQVL. Positions 196–206 are enriched in polar residues; the sequence is SDASSPRSNCS. Residues 262–271 are compositionally biased toward low complexity; that stretch reads SPAAPSLLLP. Pro residues predominate over residues 272–282; the sequence is DAPPESPPGPP. Over residues 290 to 304 the composition is skewed to polar residues; the sequence is AEQGTQTPSPDSTPQ.

As to quaternary structure, efficient DNA binding requires dimerization with another bHLH protein. Seems to form active heterodimers with ITF-2. Interacts with SUV39H1. Interacts with DDX5. Interacts with CHD2. Interacts with TSC22D3. Interacts with SETD3. Interacts with P-TEFB complex; promotes the transcriptional activity of MYOD1 through its CDK9-mediated phosphorylation. Interacts with CSRP3. Interacts with NUPR1. In terms of processing, phosphorylated by CDK9. This phosphorylation promotes its function in muscle differentiation. Acetylated by a complex containing EP300 and PCAF. The acetylation is essential to activate target genes. Conversely, its deacetylation by SIRT1 inhibits its function. Post-translationally, ubiquitinated on the N-terminus; which is required for proteasomal degradation. In terms of processing, methylation at Lys-104 by EHMT2/G9a inhibits myogenic activity.

It is found in the nucleus. Functionally, acts as a transcriptional activator that promotes transcription of muscle-specific target genes and plays a role in muscle differentiation. Together with MYF5 and MYOG, co-occupies muscle-specific gene promoter core region during myogenesis. Induces fibroblasts to differentiate into myoblasts. Interacts with and is inhibited by the twist protein. This interaction probably involves the basic domains of both proteins. The chain is Myoblast determination protein 1 (Myod1) from Rattus norvegicus (Rat).